We begin with the raw amino-acid sequence, 87 residues long: Phosphoribosyl-ATP pyrophosphatase (87 aa).

It belongs to the PRA-PH family.

It localises to the cytoplasm. The catalysed reaction is 1-(5-phospho-beta-D-ribosyl)-ATP + H2O = 1-(5-phospho-beta-D-ribosyl)-5'-AMP + diphosphate + H(+). The protein operates within amino-acid biosynthesis; L-histidine biosynthesis; L-histidine from 5-phospho-alpha-D-ribose 1-diphosphate: step 2/9. The polypeptide is Phosphoribosyl-ATP pyrophosphatase (Arthrobacter sp. (strain FB24)).